The chain runs to 246 residues: MTSEAAPASTAVTYKRVMLKISGEALMGDQGYGLHPPTVQRIAREVQAVHRLGVEICLVIGGGNIFRGLQGSAQGMERTTADYMGMLATVMNALAMQAALESLGIFTRVISAIPMDQVCEPYIRRRAVRHLEKKRVCIFAAGTGNPYFTTDTAATLRANEMACQAIFKGTKVDGVYDKDPRKFADAKRYETVSYDECLQKHLGVMDASAIALARDNDLPIIVFSLDEPGGFCGILRGEGTYTRVQG.

An ATP-binding site is contributed by 20 to 23; the sequence is KISG. Residues 28–33 form an involved in allosteric activation by GTP region; it reads GDQGYG. Gly-62 provides a ligand contact to UMP. Positions 63 and 67 each coordinate ATP. UMP-binding positions include Asp-82 and 143-150; that span reads TGNPYFTT. Residues Thr-170, Tyr-176, and Asp-179 each coordinate ATP.

It belongs to the UMP kinase family. As to quaternary structure, homohexamer.

It localises to the cytoplasm. The enzyme catalyses UMP + ATP = UDP + ADP. Its pathway is pyrimidine metabolism; CTP biosynthesis via de novo pathway; UDP from UMP (UMPK route): step 1/1. Its activity is regulated as follows. Allosterically activated by GTP. Inhibited by UTP. In terms of biological role, catalyzes the reversible phosphorylation of UMP to UDP. This chain is Uridylate kinase, found in Cereibacter sphaeroides (strain ATCC 17023 / DSM 158 / JCM 6121 / CCUG 31486 / LMG 2827 / NBRC 12203 / NCIMB 8253 / ATH 2.4.1.) (Rhodobacter sphaeroides).